Consider the following 306-residue polypeptide: Methionyl-tRNA formyltransferase (306 aa).

105–108 lines the (6S)-5,6,7,8-tetrahydrofolate pocket; that stretch reads SLLP.

It belongs to the Fmt family.

The enzyme catalyses L-methionyl-tRNA(fMet) + (6R)-10-formyltetrahydrofolate = N-formyl-L-methionyl-tRNA(fMet) + (6S)-5,6,7,8-tetrahydrofolate + H(+). In terms of biological role, attaches a formyl group to the free amino group of methionyl-tRNA(fMet). The formyl group appears to play a dual role in the initiator identity of N-formylmethionyl-tRNA by promoting its recognition by IF2 and preventing the misappropriation of this tRNA by the elongation apparatus. The protein is Methionyl-tRNA formyltransferase of Rubrobacter xylanophilus (strain DSM 9941 / JCM 11954 / NBRC 16129 / PRD-1).